Reading from the N-terminus, the 164-residue chain is Zinc finger protein ZAT8 (164 aa).

2 C2H2-type zinc fingers span residues 37–59 (FRCK…RASH) and 85–107 (HPCP…MRRH).

It is found in the nucleus. Its function is as follows. Probable transcription factor that may be involved in stress responses. The polypeptide is Zinc finger protein ZAT8 (ZAT8) (Arabidopsis thaliana (Mouse-ear cress)).